We begin with the raw amino-acid sequence, 179 residues long: Small heat shock protein hspK (179 aa).

Positions 32–178 constitute a sHSP domain; the sequence is HRINIWRPTV…DRLKIPIQSK (147 aa). Positions 80–122 are disordered; it reads KKSKGGLNNLPSSSSSINSDSTTNTNTNTTTTTTTAPPPPSDA. A compositionally biased stretch (low complexity) spans 87–114; that stretch reads NNLPSSSSSINSDSTTNTNTNTTTTTTT.

This sequence belongs to the small heat shock protein (HSP20) family.

The polypeptide is Small heat shock protein hspK (hspK) (Dictyostelium discoideum (Social amoeba)).